Reading from the N-terminus, the 605-residue chain is Protein spinster (605 aa).

The disordered stretch occupies residues 1–94; it reads MSLKHQKQSY…HPLGEHHHIP (94 aa). Over residues 27–38 the composition is skewed to low complexity; sequence SSGSSGSSSSEE. Residues 55-67 are compositionally biased toward polar residues; that stretch reads TTYSSQQLMPSDT. Basic residues predominate over residues 76–85; it reads RLRPHHHHHH. The helical transmembrane segment at 115 to 137 threads the bilayer; sequence FTVTVLCFVNLINYMDRFTIAGV. Asn-149 is a glycosylation site (N-linked (GlcNAc...) asparagine). 5 helical membrane passes run 153 to 173, 180 to 200, 203 to 223, 240 to 260, and 271 to 291; these read GLLQ…FGYL, PWIM…GSFM, FGWF…YSTI, MLAL…IVGS, and WALR…LLIK. Asn-319 is a glycosylation site (N-linked (GlcNAc...) asparagine). A run of 5 helical transmembrane segments spans residues 329–349, 367–387, 401–421, 431–451, and 465–485; these read FTCV…FIYL, FNFG…GSFL, VICA…CLLV, LIFF…DILL, and FQIL…VGAI. N-linked (GlcNAc...) asparagine glycosylation is present at Asn-519. Residues 558–578 traverse the membrane as a helical segment; the sequence is STSFVEVLGGIFFIFTACFII. A glycan (N-linked (GlcNAc...) asparagine) is linked at Asn-583.

The protein belongs to the major facilitator superfamily. Spinster (TC 2.A.1.49) family. In terms of tissue distribution, enriched in brain (at protein level).

It localises to the late endosome membrane. It is found in the lysosome membrane. Its function is as follows. Probable sphingolipid transporter that plays a central role in endosomes and/or lysosomes storage. Involved in TGF-beta-mediated synaptic growth regulation both pre- and postsynaptically via its function in endosomal storage regulation. Also required during oogenesis by regulating yolk spheres storage. This chain is Protein spinster (spin), found in Drosophila melanogaster (Fruit fly).